We begin with the raw amino-acid sequence, 129 residues long: Large ribosomal subunit protein bL17 (129 aa).

Belongs to the bacterial ribosomal protein bL17 family. As to quaternary structure, part of the 50S ribosomal subunit. Contacts protein L32.

This chain is Large ribosomal subunit protein bL17, found in Pasteurella multocida (strain Pm70).